A 215-amino-acid polypeptide reads, in one-letter code: 3-demethoxyubiquinol 3-hydroxylase (215 aa).

Positions 64, 94, 97, 146, 178, and 181 each coordinate Fe cation.

The protein belongs to the COQ7 family. It depends on Fe cation as a cofactor.

Its subcellular location is the cell membrane. It carries out the reaction a 5-methoxy-2-methyl-3-(all-trans-polyprenyl)benzene-1,4-diol + AH2 + O2 = a 3-demethylubiquinol + A + H2O. It participates in cofactor biosynthesis; ubiquinone biosynthesis. Its function is as follows. Catalyzes the hydroxylation of 2-nonaprenyl-3-methyl-6-methoxy-1,4-benzoquinol during ubiquinone biosynthesis. The polypeptide is 3-demethoxyubiquinol 3-hydroxylase (Bordetella avium (strain 197N)).